The primary structure comprises 306 residues: [methyl-Co(III) glycine betaine-specific corrinoid protein]--tetrahydrofolate methyltransferase (306 aa).

The protein belongs to the MtrH family.

The catalysed reaction is methyl-Co(III)-[glycine betaine-specific corrinoid protein] + (6S)-5,6,7,8-tetrahydrofolate = Co(I)-[glycine betaine-specific corrinoid protein] + (6S)-5-methyl-5,6,7,8-tetrahydrofolate + H(+). Methyltransferase able to catalyze the transfer of a methyl group from methylcobalamin (methylCbl) to tetrahydrofolate (THF) in vitro, to generate methyl-THF and cob(I)alamin. In vivo, the methyl group probably comes from the adjacently encoded methylated corrinoid protein DSY3155. The methyl group may then be ultimately converted to carbon dioxide, and its oxidation would also provide reducing equivalents for anaerobic respiration. Thus, may function in the pathway that allows anaerobic methylotrophic growth of D.hafniense using glycine betaine. The polypeptide is [methyl-Co(III) glycine betaine-specific corrinoid protein]--tetrahydrofolate methyltransferase (Desulfitobacterium hafniense (strain Y51)).